We begin with the raw amino-acid sequence, 139 residues long: MIFMEVTLAIVKPDGVKRGLIGEILKRYENKGLRLKAAKVVTPSIELLEKHYEEHKGKPFFKPLIEYMSSGPVFAMVLEGENAVKLVRMINGATKVEDALPGTIRGDFASSTTYNVVHGSDSVESAKREIALWFPELIL.

K12, F60, R88, T94, R105, and N115 together coordinate ATP. H118 functions as the Pros-phosphohistidine intermediate in the catalytic mechanism.

It belongs to the NDK family. As to quaternary structure, homotetramer. It depends on Mg(2+) as a cofactor.

The protein localises to the cytoplasm. It carries out the reaction a 2'-deoxyribonucleoside 5'-diphosphate + ATP = a 2'-deoxyribonucleoside 5'-triphosphate + ADP. It catalyses the reaction a ribonucleoside 5'-diphosphate + ATP = a ribonucleoside 5'-triphosphate + ADP. Major role in the synthesis of nucleoside triphosphates other than ATP. The ATP gamma phosphate is transferred to the NDP beta phosphate via a ping-pong mechanism, using a phosphorylated active-site intermediate. This Caldanaerobacter subterraneus subsp. tengcongensis (strain DSM 15242 / JCM 11007 / NBRC 100824 / MB4) (Thermoanaerobacter tengcongensis) protein is Nucleoside diphosphate kinase.